Reading from the N-terminus, the 443-residue chain is F-box/LRR-repeat protein At2g42720 (443 aa).

One can recognise an F-box domain in the interval Met-1–Asp-47. 6 LRR repeats span residues Lys-139 to Thr-167, Asp-169 to Asp-194, Cys-201 to Cys-236, Ser-271 to Ser-296, Asp-323 to Gly-348, and Cys-363 to Gly-389.

This is F-box/LRR-repeat protein At2g42720 from Arabidopsis thaliana (Mouse-ear cress).